The chain runs to 387 residues: GTPase Obg (387 aa).

The Obg domain maps to 1 to 159 (MKFLDEAKIY…MWVRLEMKLL (159 aa)). An OBG-type G domain is found at 160–334 (ADVGLVGMPN…LVYHVGGMVK (175 aa)). GTP-binding positions include 166–173 (GMPNAGKS), 191–195 (FTTLQ), 213–216 (DIPG), 283–286 (SKAD), and 315–317 (SSA). Residues S173 and T193 each coordinate Mg(2+). The disordered stretch occupies residues 347–379 (LEDAPTRAGSKALRDEHAPSWQDDDDDDDDDDG). The span at 368-379 (QDDDDDDDDDDG) shows a compositional bias: acidic residues.

This sequence belongs to the TRAFAC class OBG-HflX-like GTPase superfamily. OBG GTPase family. Monomer. Mg(2+) is required as a cofactor.

It localises to the cytoplasm. An essential GTPase which binds GTP, GDP and possibly (p)ppGpp with moderate affinity, with high nucleotide exchange rates and a fairly low GTP hydrolysis rate. Plays a role in control of the cell cycle, stress response, ribosome biogenesis and in those bacteria that undergo differentiation, in morphogenesis control. The protein is GTPase Obg of Magnetococcus marinus (strain ATCC BAA-1437 / JCM 17883 / MC-1).